A 301-amino-acid polypeptide reads, in one-letter code: Beta carbonic anhydrase 5, chloroplastic (301 aa).

A chloroplast-targeting transit peptide spans 1–56 (MAATPTHFSVSHDPFSSTSLLNLQTQAIFGPNHSLKTTQLRIPASFRRKATNLQVM). Residue T65 is modified to Phosphothreonine. Residue S128 is modified to Phosphoserine. C231 carries the S-nitrosocysteine modification.

This sequence belongs to the beta-class carbonic anhydrase family. As to expression, strongly expressed in aerial tissues including leaves, stems, flowers and siliques.

The protein localises to the plastid. Its subcellular location is the chloroplast. The catalysed reaction is hydrogencarbonate + H(+) = CO2 + H2O. In terms of biological role, reversible hydration of carbon dioxide. The chain is Beta carbonic anhydrase 5, chloroplastic (BCA5) from Arabidopsis thaliana (Mouse-ear cress).